The primary structure comprises 184 residues: uncharacterized protein (184 aa).

The region spanning 72 to 135 is the 4Fe-4S domain; that stretch reads RKSQAILLIG…GIALGSAVKV (64 aa). The [4Fe-4S] cluster site is built by cysteine 92, cysteine 95, cysteine 100, and cysteine 118.

Requires [4Fe-4S] cluster as cofactor.

This is an uncharacterized protein from Archaeoglobus fulgidus (strain ATCC 49558 / DSM 4304 / JCM 9628 / NBRC 100126 / VC-16).